The sequence spans 213 residues: Kynurenine formamidase (213 aa).

A substrate-binding site is contributed by tryptophan 20. Histidine 50, histidine 54, and aspartate 56 together coordinate Zn(2+). Catalysis depends on histidine 60, which acts as the Proton donor/acceptor. 2 residues coordinate Zn(2+): histidine 161 and glutamate 173.

Belongs to the Cyclase 1 superfamily. KynB family. Homodimer. Zn(2+) serves as cofactor.

It catalyses the reaction N-formyl-L-kynurenine + H2O = L-kynurenine + formate + H(+). It participates in amino-acid degradation; L-tryptophan degradation via kynurenine pathway; L-kynurenine from L-tryptophan: step 2/2. Its function is as follows. Catalyzes the hydrolysis of N-formyl-L-kynurenine to L-kynurenine, the second step in the kynurenine pathway of tryptophan degradation. The protein is Kynurenine formamidase of Pseudomonas paraeruginosa (strain DSM 24068 / PA7) (Pseudomonas aeruginosa (strain PA7)).